Here is a 26-residue protein sequence, read N- to C-terminus: DNA-binding transcriptional regulator NtrC (26 aa).

One can recognise a Response regulatory domain in the interval 4–26; sequence TILVADDDAAIRTVLNQALSRAG.

Post-translationally, phosphorylated and dephosphorylated by NtrB.

It is found in the cytoplasm. In terms of biological role, member of the two-component regulatory system NtrB/NtrC, which controls expression of the nitrogen-regulated (ntr) genes in response to nitrogen limitation. Phosphorylated NtrC binds directly to DNA and stimulates the formation of open promoter-sigma54-RNA polymerase complexes. The polypeptide is DNA-binding transcriptional regulator NtrC (ntrC) (Rhizobium leguminosarum bv. phaseoli).